Here is a 427-residue protein sequence, read N- to C-terminus: Peptidase B (427 aa).

Residues lysine 195 and aspartate 200 each coordinate Mn(2+). Residue lysine 207 is part of the active site. Positions 218, 277, and 279 each coordinate Mn(2+). The active site involves arginine 281.

The protein belongs to the peptidase M17 family. As to quaternary structure, homohexamer. Mn(2+) serves as cofactor.

It is found in the cytoplasm. The enzyme catalyses Release of an N-terminal amino acid, Xaa, from a peptide or arylamide. Xaa is preferably Glu or Asp but may be other amino acids, including Leu, Met, His, Cys and Gln.. In terms of biological role, probably plays an important role in intracellular peptide degradation. The polypeptide is Peptidase B (Escherichia coli O157:H7).